We begin with the raw amino-acid sequence, 491 residues long: Glutamate--tRNA ligase (491 aa).

Residues proline 9–methionine 19 carry the 'HIGH' region motif. A 'KMSKS' region motif is present at residues lysine 253–arginine 257. Lysine 256 is a binding site for ATP.

This sequence belongs to the class-I aminoacyl-tRNA synthetase family. Glutamate--tRNA ligase type 1 subfamily. Monomer.

The protein localises to the cytoplasm. It catalyses the reaction tRNA(Glu) + L-glutamate + ATP = L-glutamyl-tRNA(Glu) + AMP + diphosphate. In terms of biological role, catalyzes the attachment of glutamate to tRNA(Glu) in a two-step reaction: glutamate is first activated by ATP to form Glu-AMP and then transferred to the acceptor end of tRNA(Glu). This chain is Glutamate--tRNA ligase, found in Leifsonia xyli subsp. xyli (strain CTCB07).